Here is a 191-residue protein sequence, read N- to C-terminus: Cell division protein SepF (191 aa).

A disordered region spans residues 150 to 191 (TSSSPEEASPSSVSPKNTPQYSVENNTAPEPAWGNSKLSAFS). Over residues 151-164 (SSSPEEASPSSVSP) the composition is skewed to low complexity. A compositionally biased stretch (polar residues) spans 165-177 (KNTPQYSVENNTA).

This sequence belongs to the SepF family. Homodimer. Interacts with FtsZ.

The protein localises to the cytoplasm. In terms of biological role, cell division protein that is part of the divisome complex and is recruited early to the Z-ring. Probably stimulates Z-ring formation, perhaps through the cross-linking of FtsZ protofilaments. Its function overlaps with FtsA. The sequence is that of Cell division protein SepF from Prochlorococcus marinus (strain MIT 9312).